Reading from the N-terminus, the 362-residue chain is Aminomethyltransferase (362 aa).

It belongs to the GcvT family. In terms of assembly, the glycine cleavage system is composed of four proteins: P, T, L and H.

It catalyses the reaction N(6)-[(R)-S(8)-aminomethyldihydrolipoyl]-L-lysyl-[protein] + (6S)-5,6,7,8-tetrahydrofolate = N(6)-[(R)-dihydrolipoyl]-L-lysyl-[protein] + (6R)-5,10-methylene-5,6,7,8-tetrahydrofolate + NH4(+). Its function is as follows. The glycine cleavage system catalyzes the degradation of glycine. The sequence is that of Aminomethyltransferase from Chlorobium limicola (strain DSM 245 / NBRC 103803 / 6330).